We begin with the raw amino-acid sequence, 885 residues long: Chitobiase (885 aa).

Residues 1–27 (MNAFKLSALARLTATMGFLGGMGSAMA) form the signal peptide. 3 cysteine pairs are disulfide-bonded: Cys56–Cys66, Cys400–Cys408, and Cys505–Cys578. Catalysis depends on Glu540, which acts as the Proton donor. The segment at 866-885 (EVQVRSVSPDGKRYSRAEKV) is disordered. Residues 875 to 885 (DGKRYSRAEKV) are compositionally biased toward basic and acidic residues.

Belongs to the glycosyl hydrolase 20 family. As to quaternary structure, monomer.

It is found in the periplasm. The catalysed reaction is Hydrolysis of terminal non-reducing N-acetyl-D-hexosamine residues in N-acetyl-beta-D-hexosaminides.. It functions in the pathway glycan degradation; chitin degradation. Its function is as follows. Digests the beta-1,4-glycosidic bonds in N-acetylglucosamine (GlcNAc) oligomers (mainly dimers). The sequence is that of Chitobiase (chb) from Serratia marcescens.